A 262-amino-acid chain; its full sequence is Serine/arginine-rich SC35-like splicing factor SCL30A (262 aa).

2 disordered regions span residues 1–38 (MRGR…LPTS) and 115–262 (ENRK…SPSQ). Phosphoserine occurs at positions 9 and 20. An RRM domain is found at 37 to 115 (TSLLVRNLRH…RELTVVFAEE (79 aa)). Basic and acidic residues predominate over residues 115–140 (ENRKKPTEMRTRDRGGRSNRFQDRRR). Positions 150–161 (PPRRGRRSRSRS) are enriched in basic residues. Phosphoserine is present on residues Ser166, Ser174, Ser176, and Ser178. Basic and acidic residues predominate over residues 180-190 (QDRRYEKERSY). Phosphoserine occurs at positions 191 and 193. A compositionally biased stretch (basic residues) spans 209-226 (VKSHSRSPRRSVSPRKNR). Residues 234–246 (RSQSPVPRQSRSP) are compositionally biased toward low complexity. 3 positions are modified to phosphoserine: Ser235, Ser259, and Ser261.

Belongs to the splicing factor SR family. SCL subfamily. In terms of assembly, component of the spliceosome. Interacts with SNRNP35, CYP59 and RS2Z33.

The protein resides in the nucleus speckle. Involved in intron recognition and spliceosome assembly. Binds probably to multiple 5'-GAAG-3' repeats found in its third intron, suggesting autoregulation of alternative splicing. May be necessary for accurate splicing of the 3' region of introns. The protein is Serine/arginine-rich SC35-like splicing factor SCL30A (SCL30A) of Arabidopsis thaliana (Mouse-ear cress).